A 711-amino-acid chain; its full sequence is Double-stranded RNA-specific editase 1 (711 aa).

Residues methionine 1–proline 79 form a disordered region. The span at serine 63–threonine 73 shows a compositional bias: basic residues. In terms of domain architecture, DRBM 1 spans leucine 78–glutamine 144. Interaction with substrate RNA stretches follow at residues leucine 83–glutamate 88 and valine 104–histidine 105. Serine 149 carries the post-translational modification Phosphoserine. The interval leucine 176–proline 220 is disordered. Residues valine 192–valine 213 show a composition bias toward low complexity. Positions proline 231–asparagine 298 constitute a DRBM 2 domain. Interaction with substrate RNA regions lie at residues valine 237–glutamate 242 and histidine 259. An A to I editase domain is found at serine 370–phenylalanine 707. Histidine 394 is a Zn(2+) binding site. Glutamate 396 acts as the Proton donor in catalysis. Arginine 400 and arginine 401 together coordinate 1D-myo-inositol hexakisphosphate. Residues cysteine 451 and cysteine 526 each contribute to the Zn(2+) site. 6 residues coordinate 1D-myo-inositol hexakisphosphate: lysine 529, arginine 532, lysine 639, lysine 672, lysine 682, and lysine 700.

As to quaternary structure, homodimer. Homodimerization is essential for its catalytic activity. Can form heterodimers with isoform 5 of ADAR/ADAR1. 1D-myo-inositol hexakisphosphate is required as a cofactor. As to expression, brain and peripheral tissues.

The protein localises to the nucleus. It is found in the nucleolus. The catalysed reaction is adenosine in double-stranded RNA + H2O + H(+) = inosine in double-stranded RNA + NH4(+). In terms of biological role, catalyzes the hydrolytic deamination of adenosine to inosine in double-stranded RNA (dsRNA) referred to as A-to-I RNA editing. This may affect gene expression and function in a number of ways that include mRNA translation by changing codons and hence the amino acid sequence of proteins; pre-mRNA splicing by altering splice site recognition sequences; RNA stability by changing sequences involved in nuclease recognition; genetic stability in the case of RNA virus genomes by changing sequences during viral RNA replication; and RNA structure-dependent activities such as microRNA production or targeting or protein-RNA interactions. Can edit both viral and cellular RNAs and can edit RNAs at multiple sites (hyper-editing) or at specific sites (site-specific editing). Its cellular RNA substrates include: bladder cancer-associated protein (BLCAP), neurotransmitter receptors for glutamate (GRIA2 and GRIK2) and serotonin (HTR2C), GABA receptor (GABRA3) and potassium voltage-gated channel (KCNA1). Site-specific RNA editing of transcripts encoding these proteins results in amino acid substitutions which consequently alter their functional activities. Edits GRIA2 at both the Q/R and R/G sites efficiently but converts the adenosine in hotspot1 much less efficiently. Can inhibit cell proliferation and migration and can stimulate exocytosis. This is Double-stranded RNA-specific editase 1 (Adarb1) from Rattus norvegicus (Rat).